Reading from the N-terminus, the 51-residue chain is Insulin (51 aa).

Intrachain disulfides connect C7-C37, C19-C50, and C36-C41.

It belongs to the insulin family. In terms of assembly, heterodimer of a B chain and an A chain linked by two disulfide bonds.

It localises to the secreted. Functionally, insulin decreases blood glucose concentration. It increases cell permeability to monosaccharides, amino acids and fatty acids. It accelerates glycolysis, the pentose phosphate cycle, and glycogen synthesis in liver. In Anguilla rostrata (American eel), this protein is Insulin (ins).